A 381-amino-acid chain; its full sequence is Succinyl-diaminopimelate desuccinylase (381 aa).

Residue histidine 71 coordinates Zn(2+). Residue aspartate 73 is part of the active site. Aspartate 104 is a binding site for Zn(2+). Glutamate 136 serves as the catalytic Proton acceptor. Positions 137, 166, and 351 each coordinate Zn(2+).

This sequence belongs to the peptidase M20A family. DapE subfamily. In terms of assembly, homodimer. Requires Zn(2+) as cofactor. It depends on Co(2+) as a cofactor.

The catalysed reaction is N-succinyl-(2S,6S)-2,6-diaminopimelate + H2O = (2S,6S)-2,6-diaminopimelate + succinate. Its pathway is amino-acid biosynthesis; L-lysine biosynthesis via DAP pathway; LL-2,6-diaminopimelate from (S)-tetrahydrodipicolinate (succinylase route): step 3/3. Catalyzes the hydrolysis of N-succinyl-L,L-diaminopimelic acid (SDAP), forming succinate and LL-2,6-diaminopimelate (DAP), an intermediate involved in the bacterial biosynthesis of lysine and meso-diaminopimelic acid, an essential component of bacterial cell walls. This is Succinyl-diaminopimelate desuccinylase from Ehrlichia chaffeensis (strain ATCC CRL-10679 / Arkansas).